Consider the following 231-residue polypeptide: Ribose-5-phosphate isomerase A (231 aa).

Residues 28-31, 83-86, and 96-99 each bind substrate; these read TGST, DGAD, and KGGG. E105 acts as the Proton acceptor in catalysis. Substrate is bound at residue K123.

Belongs to the ribose 5-phosphate isomerase family. Homodimer.

It carries out the reaction aldehydo-D-ribose 5-phosphate = D-ribulose 5-phosphate. Its pathway is carbohydrate degradation; pentose phosphate pathway; D-ribose 5-phosphate from D-ribulose 5-phosphate (non-oxidative stage): step 1/1. Functionally, catalyzes the reversible conversion of ribose-5-phosphate to ribulose 5-phosphate. The protein is Ribose-5-phosphate isomerase A of Rhizobium meliloti (strain 1021) (Ensifer meliloti).